Here is a 1436-residue protein sequence, read N- to C-terminus: MAP kinase kinase kinase win1 (1436 aa).

The disordered stretch occupies residues 56–85; that stretch reads LELPNNGKEENHRRPSVARSSSDRSKASAK. Residues 76–85 show a composition bias toward basic and acidic residues; that stretch reads SSDRSKASAK. Ser224 carries the post-translational modification Phosphoserine. Position 226 is a phosphothreonine (Thr226). The segment at 282-1123 is interaction with tea4; it reads EDSDLDSETS…SNITIRWQQG (842 aa). Positions 1120–1406 constitute a Protein kinase domain; it reads WQQGGLIGSG…AAELLMDPWV (287 aa). Residues 1126–1134 and Lys1149 each bind ATP; that span reads IGSGSFGTV. The active-site Proton acceptor is Asp1244.

This sequence belongs to the protein kinase superfamily. STE Ser/Thr protein kinase family. MAP kinase kinase kinase subfamily. As to quaternary structure, interacts with tea4.

The catalysed reaction is L-seryl-[protein] + ATP = O-phospho-L-seryl-[protein] + ADP + H(+). It carries out the reaction L-threonyl-[protein] + ATP = O-phospho-L-threonyl-[protein] + ADP + H(+). Involved in a signal transduction pathway that is activated by changes in the osmolarity of the extracellular environment. Activates the wis1 MAP kinase kinase by phosphorylation. This is MAP kinase kinase kinase win1 (win1) from Schizosaccharomyces pombe (strain 972 / ATCC 24843) (Fission yeast).